The sequence spans 947 residues: MNPKKNNNTFLSYFVCLFLLLEVGLGQNQISEIKVGVVLDLNTTFSKICLTSINLALSDFYKDHPNYRTRLALHVRDSMKDTVQASAAALDLIQNEQVSAIIGPIDSMQAKFMIKLANKTQVPTISFSATSPLLTSIKSDYFVRGTIDDSYQVKAIAAIFESFGWRSVVAIYVDNELGEGIMPYLFDALQDVQVDRSVIPSEANDDQILKELYKLMTRQTRVFVVHMASRLASRIFEKATEIGMMEEGYVWLMTNGMTHMMRHIHHGRSLNTIDGVLGVRSHVPKSKGLEDFRLRWKRNFKKENPWLRDDLSIFGLWAYDSTTALAMAVEKTNISSFPYNNASGSSNNMTDLGTLHVSRYGPSLLEALSEIRFNGLAGRFNLIDRQLESPKFEIINFVGNEERIVGFWTPSNGLVNVNSNKTTSFTGERFGPLIWPGKSTIVPKGWEIPTNGKKIKVGVPVKKGFFNFVEVITDPITNITTPKGYAIDIFEAALKKLPYSVIPQYYRFESPDDDYDDLVYKVDNGTLDAVVGDVTITAYRSLYADFTLPYTESGVSMMVPVRDNENKNTWVFLKPWGLDLWVTTACFFVLIGFVVWLFEHRVNTDFRGPPHHQIGTSFWFSFSTMVFAHREKVVSNLARFVVVVWCFVVLVLTQSYTANLTSFLTVQRFQPAAINVKDLIKNGDYVGYQHGAFVKDFLIKEGFNVSKLKPFGSSEECHALLSNGSISAAFDEVAYLRAILSQYCSKYAIVEPTFKTAGFGFAFPRNSPLTGDVSKAILNVTQGDEMQHIENKWFMKQNDCPDPKTALSSNRLSLRSFWGLFLIAGIASFLALLIFVFLFLYENRHTLCDDSEDSIWRKLTSLFRNFDEKDIKSHTFKSSAVHHVSSPMTQYIPSPSTLQIAPRPHSPSQDRAFELRRVSFTPNEERLTTQTIHFEDEESDIECVVEQ.

Positions 1–26 are cleaved as a signal peptide; it reads MNPKKNNNTFLSYFVCLFLLLEVGLG. Residues 27–577 are Extracellular-facing; the sequence is QNQISEIKVG…NTWVFLKPWG (551 aa). N-linked (GlcNAc...) asparagine glycans are attached at residues N42, N118, N333, N341, N348, N420, N478, and N524. Residues 578-598 traverse the membrane as a helical segment; that stretch reads LDLWVTTACFFVLIGFVVWLF. Residues 599-607 are Cytoplasmic-facing; the sequence is EHRVNTDFR. A helical membrane pass occupies residues 608–628; that stretch reads GPPHHQIGTSFWFSFSTMVFA. The Cytoplasmic portion of the chain corresponds to 629-632; sequence HREK. The helical transmembrane segment at 633–653 threads the bilayer; it reads VVSNLARFVVVVWCFVVLVLT. Residues 654-819 lie on the Extracellular side of the membrane; sequence QSYTANLTSF…NRLSLRSFWG (166 aa). N659, N704, N723, and N779 each carry an N-linked (GlcNAc...) asparagine glycan. Residues 820 to 840 form a helical membrane-spanning segment; that stretch reads LFLIAGIASFLALLIFVFLFL. Over 841–947 the chain is Cytoplasmic; that stretch reads YENRHTLCDD…ESDIECVVEQ (107 aa).

The protein belongs to the glutamate-gated ion channel (TC 1.A.10.1) family. As to quaternary structure, may form heteromers. Expressed predominantly in leaves.

Its subcellular location is the membrane. Glutamate-gated receptor that probably acts as a non-selective cation channel. May be involved in light-signal transduction and calcium homeostasis via the regulation of calcium influx into cells. The sequence is that of Glutamate receptor 2.8 (GLR2.8) from Arabidopsis thaliana (Mouse-ear cress).